A 186-amino-acid chain; its full sequence is Large ribosomal subunit protein eL18B (186 aa).

N6,N6,N6-trimethyllysine is present on K50. Residue K116 forms a Glycyl lysine isopeptide (Lys-Gly) (interchain with G-Cter in ubiquitin) linkage.

It belongs to the eukaryotic ribosomal protein eL18 family. As to quaternary structure, component of the large ribosomal subunit (LSU). Mature yeast ribosomes consist of a small (40S) and a large (60S) subunit. The 40S small subunit contains 1 molecule of ribosomal RNA (18S rRNA) and 33 different proteins (encoded by 57 genes). The large 60S subunit contains 3 rRNA molecules (25S, 5.8S and 5S rRNA) and 46 different proteins (encoded by 81 genes). eL18 interacts with NAP1.

The protein localises to the cytoplasm. Functionally, component of the ribosome, a large ribonucleoprotein complex responsible for the synthesis of proteins in the cell. The small ribosomal subunit (SSU) binds messenger RNAs (mRNAs) and translates the encoded message by selecting cognate aminoacyl-transfer RNA (tRNA) molecules. The large subunit (LSU) contains the ribosomal catalytic site termed the peptidyl transferase center (PTC), which catalyzes the formation of peptide bonds, thereby polymerizing the amino acids delivered by tRNAs into a polypeptide chain. The nascent polypeptides leave the ribosome through a tunnel in the LSU and interact with protein factors that function in enzymatic processing, targeting, and the membrane insertion of nascent chains at the exit of the ribosomal tunnel. In Saccharomyces cerevisiae (strain ATCC 204508 / S288c) (Baker's yeast), this protein is Large ribosomal subunit protein eL18B.